A 525-amino-acid polypeptide reads, in one-letter code: Ribosomal protein S6 kinase beta-1 (525 aa).

Positions 28–32 (FDIDL) match the TOS motif motif. The tract at residues 28-54 (FDIDLDQPEDAGSEDELEEGGQLNESM) is disordered. Over residues 30 to 46 (IDLDQPEDAGSEDELEE) the composition is skewed to acidic residues. The Protein kinase domain maps to 91 to 352 (FELLRVLGKG…AGEVQAHPFF (262 aa)). ATP contacts are provided by residues 97–105 (LGKGGYGKV) and lysine 123. Aspartate 218 serves as the catalytic Proton acceptor. Threonine 252 carries the phosphothreonine; by PDPK1 modification. In terms of domain architecture, AGC-kinase C-terminal spans 353 to 423 (RHINWEELLA…VAPSVLESVK (71 aa)). Residues 380–399 (SQFDSKFTRQTPVDSPDDST) form a disordered region. Residues 381–399 (QFDSKFTRQTPVDSPDDST) are compositionally biased toward polar residues. A Phosphoserine modification is found at serine 394. Residue threonine 412 is modified to Phosphothreonine; by MTOR, NEK6 and NEK7. Residues 424–525 (EKFSFEPKIR…KRPEHLRMNL (102 aa)) are autoinhibitory domain. Residues serine 434 and serine 441 each carry the phosphoserine modification. Threonine 444 is modified (phosphothreonine). Phosphoserine is present on residues serine 447 and serine 452. A disordered region spans residues 486-509 (VTTSGEASAPLPIRQPNSGPYKKQ). Lysine 516 bears the N6-acetyllysine mark.

Belongs to the protein kinase superfamily. AGC Ser/Thr protein kinase family. S6 kinase subfamily. As to quaternary structure, interacts with PPP1R9A/neurabin-1. Interacts with RPTOR. Interacts with IRS1. Interacts with EIF3B and EIF3C. Interacts with POLDIP3. Interacts with TRAF4. Interacts (via N-terminus) with IER5. Dephosphorylation by PPP1CC at Thr-412 in mitochondrion. Phosphorylation at Thr-412 is regulated by mTORC1. The phosphorylation at this site is maintained by an agonist-dependent autophosphorylation mechanism. Activated by phosphorylation at Thr-252 by PDPK1. As to expression, brain.

The protein localises to the cytoplasm. Its subcellular location is the synapse. The protein resides in the synaptosome. It localises to the mitochondrion outer membrane. It is found in the mitochondrion. The enzyme catalyses L-seryl-[protein] + ATP = O-phospho-L-seryl-[protein] + ADP + H(+). It carries out the reaction L-threonyl-[protein] + ATP = O-phospho-L-threonyl-[protein] + ADP + H(+). With respect to regulation, activation requires multiple phosphorylation events on serine/threonine residues. Activation appears to be first mediated by phosphorylation of multiple sites in the autoinhibitory domain, which facilitates phosphorylation at Thr-412, disrupting the autoinhibitory mechanism and allowing phosphorylation of Thr-252 by PDPK1. The active conformation of the kinase is believed to be stabilized by a mechanism involving three conserved phosphorylation sites located in the kinase domain activation loop (Thr-252) and in the AGC-kinase C-terminal domain (Ser-394 in the middle of the tail/linker region and Thr-412 within a hydrophobic motif at its end). Activated by mTORC1; isoform Alpha I and isoform Alpha II are sensitive to rapamycin, which inhibits activating phosphorylation at Thr-412. Activated by PDPK1. Its function is as follows. Serine/threonine-protein kinase that acts downstream of mTOR signaling in response to growth factors and nutrients to promote cell proliferation, cell growth and cell cycle progression. Regulates protein synthesis through phosphorylation of EIF4B, RPS6 and EEF2K, and contributes to cell survival by repressing the pro-apoptotic function of BAD. Under conditions of nutrient depletion, the inactive form associates with the EIF3 translation initiation complex. Upon mitogenic stimulation, phosphorylation by the mechanistic target of rapamycin complex 1 (mTORC1) leads to dissociation from the EIF3 complex and activation. The active form then phosphorylates and activates several substrates in the pre-initiation complex, including the EIF2B complex and the cap-binding complex component EIF4B. Also controls translation initiation by phosphorylating a negative regulator of EIF4A, PDCD4, targeting it for ubiquitination and subsequent proteolysis. Promotes initiation of the pioneer round of protein synthesis by phosphorylating POLDIP3/SKAR. In response to IGF1, activates translation elongation by phosphorylating EEF2 kinase (EEF2K), which leads to its inhibition and thus activation of EEF2. Also plays a role in feedback regulation of mTORC2 by mTORC1 by phosphorylating MAPKAP1/SIN1, MTOR and RICTOR, resulting in the inhibition of mTORC2 and AKT1 signaling. Also involved in feedback regulation of mTORC1 and mTORC2 by phosphorylating DEPTOR. Mediates cell survival by phosphorylating the pro-apoptotic protein BAD and suppressing its pro-apoptotic function. Phosphorylates mitochondrial URI1 leading to dissociation of a URI1-PPP1CC complex. The free mitochondrial PPP1CC can then dephosphorylate RPS6KB1 at Thr-412, which is proposed to be a negative feedback mechanism for the RPS6KB1 anti-apoptotic function. Mediates TNF-alpha-induced insulin resistance by phosphorylating IRS1 at multiple serine residues, resulting in accelerated degradation of IRS1. In cells lacking functional TSC1-2 complex, constitutively phosphorylates and inhibits GSK3B. May be involved in cytoskeletal rearrangement through binding to neurabin. Phosphorylates and activates the pyrimidine biosynthesis enzyme CAD, downstream of MTOR. Following activation by mTORC1, phosphorylates EPRS and thereby plays a key role in fatty acid uptake by adipocytes and also most probably in interferon-gamma-induced translation inhibition. The polypeptide is Ribosomal protein S6 kinase beta-1 (Rps6kb1) (Rattus norvegicus (Rat)).